The following is a 346-amino-acid chain: Leucine zipper protein 2 (346 aa).

Positions 1 to 17 (MKFIGAVYLLFLLPALS) are cleaved as a signal peptide. N-linked (GlcNAc...) asparagine glycosylation is found at Asn-19 and Asn-131. Residues 41 to 209 (RHLSKTSKEL…QLKALKDTVH (169 aa)) are a coiled coil. Positions 162-190 (LRYGKKDLIFKGQQLMDLENKLKVAKDEL) are leucine-zipper. N-linked (GlcNAc...) asparagine glycosylation is found at Asn-241 and Asn-296. The tract at residues 271–346 (SAVMRRESTG…LKKTQSDKHN (76 aa)) is disordered. Positions 293–324 (CSHNQTESSSVMKKTFGHSQSKTPEQNGQGQA) are enriched in polar residues. A compositionally biased stretch (basic and acidic residues) spans 326 to 346 (TAEESVKTDGELKKTQSDKHN).

It localises to the secreted. The sequence is that of Leucine zipper protein 2 (luzp2) from Danio rerio (Zebrafish).